The chain runs to 185 residues: Ribosome-recycling factor (185 aa).

Belongs to the RRF family.

The protein localises to the cytoplasm. Its function is as follows. Responsible for the release of ribosomes from messenger RNA at the termination of protein biosynthesis. May increase the efficiency of translation by recycling ribosomes from one round of translation to another. The chain is Ribosome-recycling factor from Methylobacillus flagellatus (strain ATCC 51484 / DSM 6875 / VKM B-1610 / KT).